The primary structure comprises 397 residues: Odorant receptor 2a (397 aa).

The Cytoplasmic segment spans residues 1 to 38 (MEKQEDFKLNTHSAVYYHWRVWELTGLMRPPGVSSLLY). A helical membrane pass occupies residues 39 to 59 (VVYSITVNLVVTVLFPLSLLA). Residues 60–72 (RLLFTTNMAGLCE) lie on the Extracellular side of the membrane. Residues 73–92 (NLTITITDIVANLKFANVYM) traverse the membrane as a helical segment. Over 93-131 (VRKQLHEIRSLLRLMDARARLVGDPEEISALRKEVNIAQ) the chain is Cytoplasmic. A helical membrane pass occupies residues 132–150 (GTFRTFASIFVFGTTLSCV). The Extracellular portion of the chain corresponds to 151–176 (RVVVRPDRELLYPAWFGVDWMHSTRN). Residues 177 to 197 (YVLINIYQLFGLIVQAIQNCA) traverse the membrane as a helical segment. Residues 198 to 272 (SDSYPPAFLC…IIQRVLSVPC (75 aa)) are Cytoplasmic-facing. The chain crosses the membrane as a helical span at residues 273–293 (MAQFVCSAAVQCTVAMHFLYV). The Extracellular portion of the chain corresponds to 294–301 (ADDHDHTA). Residues 302 to 322 (MIISIVFFSAVTLEVFVICYF) traverse the membrane as a helical segment. The Cytoplasmic segment spans residues 323 to 363 (GDRMRTQSEALCDAFYDCNWIEQLPKFKRELLFTLARTQRP). The chain crosses the membrane as a helical span at residues 364–383 (SLIYAGNYIALSLETFEQVM). Over 384–397 (RFTYSVFTLLLRAK) the chain is Extracellular.

It belongs to the insect chemoreceptor superfamily. Heteromeric odorant receptor channel (TC 1.A.69) family. Or2a subfamily. Interacts with Orco. Complexes exist early in the endomembrane system in olfactory sensory neurons (OSNs), coupling these complexes to the conserved ciliary trafficking pathway. As to expression, expressed in 20 sensory neurons on the distal edge of the antenna.

The protein resides in the cell membrane. Its function is as follows. Odorant receptor which mediates acceptance or avoidance behavior, depending on its substrates. The odorant receptor repertoire encodes a large collection of odor stimuli that vary widely in identity, intensity, and duration. May form a complex with Orco to form odorant-sensing units, providing sensitive and prolonged odorant signaling and calcium permeability. This is Odorant receptor 2a (Or2a) from Drosophila melanogaster (Fruit fly).